The primary structure comprises 357 residues: GDP-polyphosphate phosphotransferase (357 aa).

A disordered region spans residues 1–83 (MSEEPTVSPP…DSTSASLPAN (83 aa)). The span at 14–25 (QPAAQPAKPARP) shows a compositional bias: low complexity. Residues 26–40 (AARRAPRKPATRRPR) are compositionally biased toward basic residues.

This sequence belongs to the polyphosphate kinase 2 (PPK2) family. Class I subfamily. In terms of assembly, homotetramer. Also forms octamers. Requires Mg(2+) as cofactor. The cofactor is Mn(2+).

The catalysed reaction is [phosphate](n) + GTP = [phosphate](n+1) + GDP. The enzyme catalyses [phosphate](n) + ATP = [phosphate](n+1) + ADP. Its function is as follows. Uses inorganic polyphosphate (polyP) as a donor to convert GDP to GTP and ADP to ATP. Shows a preference for GDP. Can also catalyze the synthesis of polyP from GTP or ATP, but the rate of polyP utilization is 75-fold greater than the rate of polyP synthesis. This Pseudomonas aeruginosa (strain ATCC 15692 / DSM 22644 / CIP 104116 / JCM 14847 / LMG 12228 / 1C / PRS 101 / PAO1) protein is GDP-polyphosphate phosphotransferase.